A 411-amino-acid chain; its full sequence is Putative glycosyltransferase SCO3672 (411 aa).

10 helical membrane passes run 7–27, 45–65, 70–90, 120–140, 148–168, 169–189, 197–217, 227–247, 277–297, and 301–321; these read IAAA…LAAL, PVPL…AWAG, VVPL…VGAL, ETGP…TGAF, GVVG…AAVE, LMDG…GFLL, IALG…AAVL, GAGV…LVLL, GVVV…VLAH, and VGGQ…LGLL.

It belongs to the glycosyltransferase 4 family.

Its subcellular location is the cell membrane. In Streptomyces coelicolor (strain ATCC BAA-471 / A3(2) / M145), this protein is Putative glycosyltransferase SCO3672.